The following is a 215-amino-acid chain: Cytochrome b6 (215 aa).

The helical transmembrane segment at 32-52 (IFYCLGGITLTCFLVQVATGF) threads the bilayer. Cysteine 35 contacts heme c. Heme b contacts are provided by histidine 86 and histidine 100. 3 helical membrane passes run 90–110 (ASMM…TGGF), 116–136 (LTWV…VTGY), and 186–206 (LHTF…FLMI). Residues histidine 187 and histidine 202 each contribute to the heme b site.

Belongs to the cytochrome b family. PetB subfamily. The 4 large subunits of the cytochrome b6-f complex are cytochrome b6, subunit IV (17 kDa polypeptide, PetD), cytochrome f and the Rieske protein, while the 4 small subunits are PetG, PetL, PetM and PetN. The complex functions as a dimer. It depends on heme b as a cofactor. The cofactor is heme c.

Its subcellular location is the plastid. It is found in the chloroplast thylakoid membrane. In terms of biological role, component of the cytochrome b6-f complex, which mediates electron transfer between photosystem II (PSII) and photosystem I (PSI), cyclic electron flow around PSI, and state transitions. The sequence is that of Cytochrome b6 from Arabidopsis thaliana (Mouse-ear cress).